Reading from the N-terminus, the 341-residue chain is tRNA N6-adenosine threonylcarbamoyltransferase (341 aa).

Fe cation is bound by residues His113 and His117. Substrate-binding positions include 136 to 140 (IISGG), Asp169, Gly182, and Asn280. A Fe cation-binding site is contributed by Asp308.

This sequence belongs to the KAE1 / TsaD family. It depends on Fe(2+) as a cofactor.

The protein resides in the cytoplasm. It catalyses the reaction L-threonylcarbamoyladenylate + adenosine(37) in tRNA = N(6)-L-threonylcarbamoyladenosine(37) in tRNA + AMP + H(+). Required for the formation of a threonylcarbamoyl group on adenosine at position 37 (t(6)A37) in tRNAs that read codons beginning with adenine. Is involved in the transfer of the threonylcarbamoyl moiety of threonylcarbamoyl-AMP (TC-AMP) to the N6 group of A37, together with TsaE and TsaB. TsaD likely plays a direct catalytic role in this reaction. This Anaplasma marginale (strain St. Maries) protein is tRNA N6-adenosine threonylcarbamoyltransferase.